Consider the following 289-residue polypeptide: MPLTAESAAQQIQDRLKDIQQNIHNVDEERRRAENSIASLVRSLHATNQKVKPLLKASLTEAAQEEATIRAALAKIHEIRSIRNERRIQARNAGNKEAIRRGALMKMVQLSAQTLPLFVGKLGERAPALCGAIPAEGNYVAKVGDNVAALAKGIDEEENWILAEVVQFLHRQNKYDVIDIDEEQKDRHVLSKRKVIPLPLMRANPETDGHALFPKDTVVMALYPQTTCFYKAIVHRLPQTATEDYEVLFEDSSYTNGYAEPLPVAQRYVIAYRPTKKGAGSGSGNLSSA.

Residues 9–36 adopt a coiled-coil conformation; it reads AQQIQDRLKDIQQNIHNVDEERRRAENS. In terms of domain architecture, SGF29 C-terminal spans 137–278; it reads GNYVAKVGDN…VIAYRPTKKG (142 aa). 2 histone H3K4me3 N-terminus binding regions span residues 179-181 and 225-228; these read DID and QTTC. A histone H3K4me3 binding region spans residues 249–251; it reads FED.

It belongs to the SGF29 family. As to quaternary structure, component of the Spt-Ada-Gcn5 acetyltransferase (SAGA) complex consisting of wda/Taf5L, Saf6, Taf9, Taf10b, Taf12, Ada1, Spt3, Spt7, Spt20, Sf3b3, Sf3b5, Nipped-A/Tra1, a histone acetyltransferase (HAT) module made up of Gcn5, Ada2b (Isoform B), Ada3 and Sgf29, and a deubiquitinase (DUB) module made up of not/nonstop, Sgf11, Atxn7 and e(y)2. Component of the Chiffon histone acetyltransferase (CHAT) complex consisting of Ada3, Sgf29, Gcn5, chif/chiffon and Ada2b (Isoform A).

It is found in the nucleus. In terms of biological role, component of both the SAGA and CHAT histone acetyltransferase complexes, which both predominantly acetylate histone H3. The polypeptide is SAGA-associated factor 29kDa (Drosophila melanogaster (Fruit fly)).